A 358-amino-acid polypeptide reads, in one-letter code: Probable protein phosphatase 2C 68 (358 aa).

A PPM-type phosphatase domain is found at 74 to 352 (RHGAASVAGR…DNISVVVVDL (279 aa)). Positions 117, 118, 298, and 343 each coordinate Mn(2+).

Belongs to the PP2C family. It depends on Mg(2+) as a cofactor. The cofactor is Mn(2+).

The protein resides in the nucleus. It localises to the cytoplasm. It is found in the cytosol. It catalyses the reaction O-phospho-L-seryl-[protein] + H2O = L-seryl-[protein] + phosphate. It carries out the reaction O-phospho-L-threonyl-[protein] + H2O = L-threonyl-[protein] + phosphate. In terms of biological role, involved in the regulation of abiotic stress responses. Acts as a negative regulator of abscisic acid (ABA) signaling and positive regulator of abiotic stress signaling. May be involved in panicle development. This Oryza sativa subsp. japonica (Rice) protein is Probable protein phosphatase 2C 68.